The sequence spans 205 residues: NADH-quinone oxidoreductase subunit C (205 aa).

This sequence belongs to the complex I 30 kDa subunit family. As to quaternary structure, NDH-1 is composed of 14 different subunits. Subunits NuoB, C, D, E, F, and G constitute the peripheral sector of the complex.

The protein localises to the cell inner membrane. It carries out the reaction a quinone + NADH + 5 H(+)(in) = a quinol + NAD(+) + 4 H(+)(out). In terms of biological role, NDH-1 shuttles electrons from NADH, via FMN and iron-sulfur (Fe-S) centers, to quinones in the respiratory chain. The immediate electron acceptor for the enzyme in this species is believed to be ubiquinone. Couples the redox reaction to proton translocation (for every two electrons transferred, four hydrogen ions are translocated across the cytoplasmic membrane), and thus conserves the redox energy in a proton gradient. This chain is NADH-quinone oxidoreductase subunit C, found in Nitrosospira multiformis (strain ATCC 25196 / NCIMB 11849 / C 71).